Reading from the N-terminus, the 388-residue chain is Galactokinase (388 aa).

E32–D35 serves as a coordination point for substrate. Residues S66 and G123–S129 contribute to the ATP site. 2 residues coordinate Mg(2+): S129 and E161. The active-site Proton acceptor is D173. A substrate-binding site is contributed by Y223.

The protein belongs to the GHMP kinase family. GalK subfamily.

Its subcellular location is the cytoplasm. The catalysed reaction is alpha-D-galactose + ATP = alpha-D-galactose 1-phosphate + ADP + H(+). It participates in carbohydrate metabolism; galactose metabolism. Its function is as follows. Catalyzes the transfer of the gamma-phosphate of ATP to D-galactose to form alpha-D-galactose-1-phosphate (Gal-1-P). The polypeptide is Galactokinase (Staphylococcus carnosus (strain TM300)).